Here is a 196-residue protein sequence, read N- to C-terminus: Transcriptional regulatory protein UhpA (196 aa).

In terms of domain architecture, Response regulatory spans 3 to 116 (TVALIDDHLI…ELIAAVHTVA (114 aa)). Asp54 is modified (4-aspartylphosphate). One can recognise an HTH luxR-type domain in the interval 131-196 (ASGRQDPLTK…ELARRMFDGW (66 aa)). Residues 155–174 (VKEIAAELGLSPKTVHVHRA) constitute a DNA-binding region (H-T-H motif).

Post-translationally, phosphorylated and dephosphorylated by UhpB.

The protein localises to the cytoplasm. Phosphorylation by UhpB enhances DNA binding activity. Functionally, part of the UhpABC signaling cascade that controls the expression of the hexose phosphate transporter UhpT. Activates the transcription of the uhpT gene. Acts by binding specifically to the uhpT promoter region. The chain is Transcriptional regulatory protein UhpA (uhpA) from Escherichia coli (strain K12).